The following is a 293-amino-acid chain: 5'-3' exoribonuclease Rnm (293 aa).

His13, His15, Asp20, His45, Glu72, His83, His198, Asp255, and His257 together coordinate Mn(2+).

It belongs to the PHP family. TrpH/YciV subfamily. Mn(2+) serves as cofactor.

It catalyses the reaction a ribonucleoside 3',5'-bisphosphate + H2O = a ribonucleoside 5'-phosphate + phosphate. In terms of biological role, exoribonuclease that catalyzes the last steps of 5S, 16S and 23S rRNA 5'-end maturation. Removes 3 nucleotides (nt) from the 5' end of 5S, 16S and 23S rRNA precursors to generate the mature 5' ends. Precursors with longer extensions are not processed (7 nt at the 5' end of pre-23S rRNA or 66 nt at the 5'-end of 16S rRNA are not processed). 5S and 23S rRNA maturation occurs more efficiently and accurately on ribosomal particles as compared to free RNA; the enzyme overdigests free RNA but generates the correct 5'-end in ribosomes from rnm deletion strains. Efficiently catalyzes the hydrolysis of the 3'-phosphate from 3',5'-bis-phosphonucleotides as well as the successive hydrolysis of 5'-phosphomononucleotides from the 5'-end of short pieces of RNA and DNA, with no specificity toward the identity of the nucleotide base. Is more efficient at hydrolyzing RNA oligonucleotides than DNA oligonucleotides. This enzyme can also hydrolyze annealed DNA duplexes, albeit at a catalytic efficiency approximately 10-fold lower than that of the corresponding single-stranded oligonucleotides. The sequence is that of 5'-3' exoribonuclease Rnm from Escherichia coli (strain K12).